Reading from the N-terminus, the 291-residue chain is tRNA U34 carboxymethyltransferase (291 aa).

Residues Lys61, Trp75, Lys80, Gly100, 122-124 (DPS), 149-150 (VE), Tyr169, and Arg284 contribute to the carboxy-S-adenosyl-L-methionine site.

This sequence belongs to the class I-like SAM-binding methyltransferase superfamily. CmoB family. Homotetramer.

It catalyses the reaction carboxy-S-adenosyl-L-methionine + 5-hydroxyuridine(34) in tRNA = 5-carboxymethoxyuridine(34) in tRNA + S-adenosyl-L-homocysteine + H(+). Catalyzes carboxymethyl transfer from carboxy-S-adenosyl-L-methionine (Cx-SAM) to 5-hydroxyuridine (ho5U) to form 5-carboxymethoxyuridine (cmo5U) at position 34 in tRNAs. The protein is tRNA U34 carboxymethyltransferase of Campylobacter jejuni (strain RM1221).